Consider the following 348-residue polypeptide: Probable dual-specificity RNA methyltransferase RlmN (348 aa).

Catalysis depends on Glu-89, which acts as the Proton acceptor. Residues 95-328 (HKNRNTVCVS…VTLRISYGSR (234 aa)) form the Radical SAM core domain. Cys-102 and Cys-333 are oxidised to a cystine. The [4Fe-4S] cluster site is built by Cys-109, Cys-113, and Cys-116. S-adenosyl-L-methionine contacts are provided by residues 159 to 160 (GE), Ser-191, 214 to 216 (SLH), and Asn-290. The S-methylcysteine intermediate role is filled by Cys-333.

The protein belongs to the radical SAM superfamily. RlmN family. [4Fe-4S] cluster is required as a cofactor.

Its subcellular location is the cytoplasm. It carries out the reaction adenosine(2503) in 23S rRNA + 2 reduced [2Fe-2S]-[ferredoxin] + 2 S-adenosyl-L-methionine = 2-methyladenosine(2503) in 23S rRNA + 5'-deoxyadenosine + L-methionine + 2 oxidized [2Fe-2S]-[ferredoxin] + S-adenosyl-L-homocysteine. The catalysed reaction is adenosine(37) in tRNA + 2 reduced [2Fe-2S]-[ferredoxin] + 2 S-adenosyl-L-methionine = 2-methyladenosine(37) in tRNA + 5'-deoxyadenosine + L-methionine + 2 oxidized [2Fe-2S]-[ferredoxin] + S-adenosyl-L-homocysteine. In terms of biological role, specifically methylates position 2 of adenine 2503 in 23S rRNA and position 2 of adenine 37 in tRNAs. This chain is Probable dual-specificity RNA methyltransferase RlmN, found in Dictyoglomus thermophilum (strain ATCC 35947 / DSM 3960 / H-6-12).